The sequence spans 417 residues: Hydroxysqualene dehydroxylase (417 aa).

Belongs to the HpnE family.

The enzyme catalyses squalene + FAD + H2O + H(+) = hydroxysqualene + FADH2. It participates in secondary metabolite biosynthesis; hopanoid biosynthesis. Its function is as follows. Involved in the biosynthesis of the hopanoid precursor squalene (SQ) from farnesyl diphosphate (FPP). Catalyzes the third (last) step, the reduction of hydroxysqualene (HSQ) to SQ. The protein is Hydroxysqualene dehydroxylase of Sinorhizobium fredii (strain NBRC 101917 / NGR234).